The primary structure comprises 306 residues: Mycothiol acetyltransferase (306 aa).

N-acetyltransferase domains are found at residues 5 to 162 (VWAE…TFVP) and 155 to 306 (VRLR…AQGS). Acetyl-CoA is bound by residues 82–84 (LIV) and 90–95 (RRGHGT). 1D-myo-inositol 2-(L-cysteinylamino)-2-deoxy-alpha-D-glucopyranoside is bound by residues Glu182, Lys222, and Glu238. Residues 242-244 (VGV) and 249-255 (QGGGLGK) each bind acetyl-CoA. Tyr276 lines the 1D-myo-inositol 2-(L-cysteinylamino)-2-deoxy-alpha-D-glucopyranoside pocket.

This sequence belongs to the acetyltransferase family. MshD subfamily. Monomer.

The catalysed reaction is 1D-myo-inositol 2-(L-cysteinylamino)-2-deoxy-alpha-D-glucopyranoside + acetyl-CoA = mycothiol + CoA + H(+). Its function is as follows. Catalyzes the transfer of acetyl from acetyl-CoA to desacetylmycothiol (Cys-GlcN-Ins) to form mycothiol. The polypeptide is Mycothiol acetyltransferase (Saccharomonospora viridis (strain ATCC 15386 / DSM 43017 / JCM 3036 / CCUG 5913 / NBRC 12207 / NCIMB 9602 / P101) (Thermoactinomyces viridis)).